A 155-amino-acid chain; its full sequence is Immunoglobulin domain-containing protein oig-4 (155 aa).

The first 22 residues, 1–22, serve as a signal peptide directing secretion; sequence MSFRLWGRCIFFFCFLLEAIDS. N-linked (GlcNAc...) asparagine glycosylation is found at N55 and N114. An Ig-like C2-type domain is found at 73–154; sequence GYKLLIICKA…MAKNFKAEYT (82 aa). C80 and C136 are disulfide-bonded.

In terms of assembly, interacts with the non-alpha subunit of nicotinic acetylcholine receptor unc-29 and lev-10 to stabilize the complex formed between unc-29 and lev-10. As to expression, expressed in body wall muscle cells, the pharyngeal muscle cell pm6 and in four head neurons.

It is found in the synapse. The protein resides in the secreted. Functionally, required for the localization of acetylcholine receptors at neuromuscular junctions and for subsequently controlling the response evoked by receptor stimulation. This Caenorhabditis elegans protein is Immunoglobulin domain-containing protein oig-4.